A 196-amino-acid polypeptide reads, in one-letter code: Small ribosomal subunit protein uS4c (196 aa).

Positions 15–43 (LGALPGLTRKTPKSGSNQKKKFHSGKKEQ) are disordered. The S4 RNA-binding domain occupies 89–150 (MRLDNILFRL…NQRSKRLVQN (62 aa)).

Belongs to the universal ribosomal protein uS4 family. Part of the 30S ribosomal subunit. Contacts protein S5. The interaction surface between S4 and S5 is involved in control of translational fidelity.

The protein localises to the plastid. It is found in the chloroplast. Its function is as follows. One of the primary rRNA binding proteins, it binds directly to 16S rRNA where it nucleates assembly of the body of the 30S subunit. With S5 and S12 plays an important role in translational accuracy. This Melinis repens (Red Natal grass) protein is Small ribosomal subunit protein uS4c (rps4).